Consider the following 970-residue polypeptide: Testis anion transporter 1 (970 aa).

Over 1 to 95 the chain is Cytoplasmic; it reads MAQLERSAIS…YRLKDWLLGD (95 aa). The chain crosses the membrane as a helical span at residues 96-116; it reads LLAGISVGLVQVPQGLTLSLL. The Extracellular portion of the chain corresponds to 117 to 119; it reads ARQ. Residues 120-140 form a helical membrane-spanning segment; the sequence is LIPPLNIAYAAFCSSVIYVIF. Over 141–146 the chain is Cytoplasmic; that stretch reads GSCHQM. The chain crosses the membrane as a helical span at residues 147-167; the sequence is SIGSFFLVSALLINVLKVSPF. Residues 168–202 are Extracellular-facing; the sequence is NNGQLVMGSFVKNEFSAPSYLMGYNKSLSVVATTT. Residue N192 is glycosylated (N-linked (GlcNAc...) asparagine). A helical membrane pass occupies residues 203–223; sequence FLTGIIQLIMGVLGLGFIATY. The Cytoplasmic segment spans residues 224 to 232; sequence LPESAMSAY. A helical transmembrane segment spans residues 233–253; the sequence is LAAVALHIMLSQLTFIFGIMI. At 254-270 the chain is on the extracellular side; that stretch reads SFHAGPISFFYDIINYC. A helical membrane pass occupies residues 271–291; sequence VALPKANSTSILVFLTVVVAL. Over 292–307 the chain is Cytoplasmic; sequence RINKCIRISFNQYPIE. The chain crosses the membrane as a helical span at residues 308-328; it reads FPMELFLIIGFTVIANKISMA. At 329–355 the chain is on the extracellular side; sequence TETSQTLIDMIPYSFLLPVTPDFSLLP. The helical transmembrane segment at 356–376 threads the bilayer; sequence KIILQAFSLSLVSSFLLIFLG. Residues 377–392 lie on the Cytoplasmic side of the membrane; the sequence is KKIASLHNYSVNSNQD. The chain crosses the membrane as a helical span at residues 393-413; it reads LIAIGLCNVVSSFFRSCVFTG. The Extracellular segment spans residues 414 to 429; sequence AIARTIIQDKSGGRQQ. The chain crosses the membrane as a helical span at residues 430 to 450; that stretch reads FASLVGAGVMLLLMVKMGHFF. The Cytoplasmic portion of the chain corresponds to 451–452; the sequence is YT. Residues 453-473 traverse the membrane as a helical segment; sequence LPNAVLAGIILSNVIPYLETI. Topologically, residues 474–497 are extracellular; sequence SNLPSLWRQDQYDCALWMMTFSSS. The helical transmembrane segment at 498–518 threads the bilayer; the sequence is IFLGLDIGLIISVVSAFFITT. Residues 519-970 lie on the Cytoplasmic side of the membrane; it reads VRSHRAKILL…SPEGNSNEDV (452 aa). Residues 543-795 form the STAS domain; the sequence is DYREIITIPG…LSVHDAVLFA (253 aa). The tract at residues 664-970 is interaction with RACGAP1; that stretch reads TVSSVSQKNQ…SPEGNSNEDV (307 aa). Positions 858–868 are enriched in acidic residues; that stretch reads SELDLELESEQ. Residues 858 to 970 form a disordered region; it reads SELDLELESE…SPEGNSNEDV (113 aa). Residues 877–898 are compositionally biased toward basic and acidic residues; sequence DLDRELEPEMEPKAETETKTQT. The segment covering 938-948 has biased composition (low complexity); it reads STQSQTQTRTW.

It belongs to the SLC26A/SulP transporter (TC 2.A.53) family. In terms of assembly, interacts with RACGAP1. Interacts with CFTR; stimulates anion transport activity of CFTR. In terms of processing, N-glycosylated. In terms of tissue distribution, expression observed exclusively in testis, restricted to the meiotic phase of the germ cell. Abundant expression located in the seminiferous tubules, concentrated on the luminal side of the tubuli harboring the spermatocytes and spermatids.

It is found in the membrane. The catalysed reaction is sulfate(out) + chloride(in) = sulfate(in) + chloride(out). It catalyses the reaction oxalate(in) + chloride(out) = oxalate(out) + chloride(in). With respect to regulation, activity is inhibited by 4,4'-Di-isothiocyanatostilbene-2,2'-disulfonic acid (DIDS - an inhibitor of several anion channels and transporters) and gluconate. Antiporter that mediates the exchange of sulfate and oxalate against chloride ions across a membrane. Stimulates anion transport activity of CFTR. May cooperate with CFTR in the regulation of chloride and bicarbonate ions fluxes required for activation of the ADCY10/PKA pathway during sperm motility and sperm capacitation. May play a role in sperm tail differentiation and motility and hence male fertility. This Homo sapiens (Human) protein is Testis anion transporter 1.